Reading from the N-terminus, the 65-residue chain is Prokaryotic ubiquitin-like protein UBact (65 aa).

The segment covering 1-17 (MEVNMPTTEQGQKNKQM) has biased composition (polar residues). Positions 1 to 65 (MEVNMPTTEQ…ARRYRQRTGE (65 aa)) are disordered. A compositionally biased stretch (basic and acidic residues) spans 35–65 (KVEKPNTEEILKRMRKVDPDQARRYRQRTGE). An Isoglutamyl lysine isopeptide (Glu-Lys) (interchain with K-? in acceptor proteins) cross-link involves residue glutamate 65.

It belongs to the ubiquitin-like protein UBact family.

Functionally, may function as a protein modifier covalently attached to lysine residues of substrate proteins. This may serve to target the modified proteins for degradation by proteasomes. In Methylacidiphilum infernorum (isolate V4) (Methylokorus infernorum (strain V4)), this protein is Prokaryotic ubiquitin-like protein UBact.